Reading from the N-terminus, the 163-residue chain is MVTKKSKKAWPWLWLSVLVILLDQLSKYLANHFLSLGHPVKILPFLNFTLNYNTGAAFSFLGTENGWQIIFFAAISFVVSIFLILWLSRTSRSEIMMSLGLSLIIGGALGNFIDRLRWSYVTDFIDFHIKDWHFATFNVADSAICVGVFLLIVYMLLTPSSKP.

4 helical membrane-spanning segments follow: residues 9-29, 42-62, 67-87, and 93-113; these read AWPW…SKYL, ILPF…SFLG, WQII…ILWL, and SEIM…GNFI. Active-site residues include Asp123 and Asp141. The helical transmembrane segment at 137-157 threads the bilayer; the sequence is FNVADSAICVGVFLLIVYMLL.

It belongs to the peptidase A8 family.

Its subcellular location is the cell inner membrane. It carries out the reaction Release of signal peptides from bacterial membrane prolipoproteins. Hydrolyzes -Xaa-Yaa-Zaa-|-(S,diacylglyceryl)Cys-, in which Xaa is hydrophobic (preferably Leu), and Yaa (Ala or Ser) and Zaa (Gly or Ala) have small, neutral side chains.. It functions in the pathway protein modification; lipoprotein biosynthesis (signal peptide cleavage). Its function is as follows. This protein specifically catalyzes the removal of signal peptides from prolipoproteins. This is Lipoprotein signal peptidase from Coxiella burnetii (strain Dugway 5J108-111).